The sequence spans 362 residues: Lipoprotein p35 (362 aa).

A signal peptide spans Met-1–Ser-30. Cys-31 is lipidated: N-palmitoyl cysteine. Cys-31 carries the S-diacylglycerol cysteine lipid modification. A disordered region spans residues Ser-33–Gln-53.

This sequence belongs to the p35 lipoprotein family. The N-terminus is blocked.

The protein resides in the cell membrane. Major M.penetrans antigen. This is Lipoprotein p35 from Malacoplasma penetrans (Mycoplasma penetrans).